The sequence spans 1036 residues: Phytosulfokine receptor 2 (1036 aa).

Positions 1-16 are cleaved as a signal peptide; that stretch reads MVIILLLVFFVGSSVS. Residues N36 and N45 are each glycosylated (N-linked (GlcNAc...) asparagine). LRR repeat units follow at residues 89-111, 113-136, 137-159, 160-182, 185-207, 209-231, 233-256, 257-279, 281-303, 305-326, 329-351, 353-375, 377-398, 403-423, 427-450, 451-473, and 475-498; these read ELRV…ISKL, QLQV…SGLK, LIQS…GVFP, GLVM…LCSS, GIQV…YNCS, SIQQ…LYSI, ELEQ…SNLS, GLKS…FGNL, QLEH…LSQC, KLRV…NFTG, DLCV…LGHC, KMKI…FKNL, SLLF…MNVL, NLST…NNVT, NLAI…LNCK, KLEV…IGKM, and SLFY…TELK. N-linked (GlcNAc...) asparagine glycosylation is found at N142, N165, and N205. N-linked (GlcNAc...) asparagine glycosylation is found at N251, N254, and N278. N313 and N323 each carry an N-linked (GlcNAc...) asparagine glycan. N-linked (GlcNAc...) asparagine glycosylation is found at N385, N403, and N421. Residues N483, N504, N523, N549, and N571 are each glycosylated (N-linked (GlcNAc...) asparagine). LRR repeat units lie at residues 561–583 and 585–606; these read ELHM…ISGL and NLEV…SFQS. Residues 680–700 form a helical membrane-spanning segment; that stretch reads IVVLTISLAIGITLLLSVILL. T751 is subject to Phosphothreonine. A Protein kinase domain is found at 754 to 1025; it reads FSQANIIGCG…PLIEEVVTWL (272 aa). ATP is bound by residues 760 to 768 and K782; that span reads IGCGGFGLV. Phosphotyrosine occurs at positions 827 and 867. Catalysis depends on D880, which acts as the Proton acceptor. Phosphotyrosine is present on Y922. An LRR 20 repeat occupies 995–1020; that stretch reads RTVLEMLEIACKCIDHEPRRRPLIEE.

Belongs to the protein kinase superfamily. Ser/Thr protein kinase family.

The protein localises to the cell membrane. It catalyses the reaction L-seryl-[protein] + ATP = O-phospho-L-seryl-[protein] + ADP + H(+). The enzyme catalyses L-threonyl-[protein] + ATP = O-phospho-L-threonyl-[protein] + ADP + H(+). Phytosulfokine receptor with a serine/threonine-protein kinase activity. The chain is Phytosulfokine receptor 2 (PSKR2) from Arabidopsis thaliana (Mouse-ear cress).